The sequence spans 61 residues: Large ribosomal subunit protein uL30 (61 aa).

The protein belongs to the universal ribosomal protein uL30 family. Part of the 50S ribosomal subunit.

This is Large ribosomal subunit protein uL30 from Teredinibacter turnerae (strain ATCC 39867 / T7901).